Reading from the N-terminus, the 384-residue chain is uncharacterized protein (384 aa).

Helical transmembrane passes span L22–K42, L52–V72, A81–N101, M106–I126, F143–W163, L164–L184, L202–L222, G240–G260, V276–S296, A299–F319, V327–A347, and I352–L372.

It belongs to the major facilitator superfamily.

The protein localises to the membrane. This is an uncharacterized protein from Yersinia pestis.